The primary structure comprises 373 residues: Muconate cycloisomerase 1 (373 aa).

Lys169 is an active-site residue. Lys169 serves as the catalytic Proton acceptor. Mn(2+) contacts are provided by Asp198, Glu224, and Asp249. Glu327 acts as the Proton donor in catalysis.

It belongs to the mandelate racemase/muconate lactonizing enzyme family. Mn(2+) serves as cofactor.

The catalysed reaction is (S)-muconolactone = cis,cis-muconate + H(+). This Rhodococcus opacus (Nocardia opaca) protein is Muconate cycloisomerase 1 (catB).